A 474-amino-acid chain; its full sequence is MATNWGSLLQDKQQLEELARQAVDRALAEGVLLRTSQEPTSSEVVSYAPFTLFPSLVPSALLEQAYAVQMDFNLLVDAVSQNAAFLEQTLSSTIKQDDFTARLFDIHKQVLKEGIAQTVFLGLNRSDYMFQRSADGSPALKQIEINTISASFGGLASRTPAVHRHVLSVLSKTKEAGKILSNNPSKGLALGIAKAWELYGSPNALVLLIAQEKERNIFDQRAIENELLARNIHVIRRTFEDISEKGSLDQDRRLFVDGQEIAVVYFRDGYMPRQYSLQNWEARLLLERSHAAKCPDIATQLAGTKKVQQELSRPGMLEMLLPGQPEAVARLRATFAGLYSLDVGEEGDQAIAEALAAPSRFVLKPQREGGGNNLYGEEMVQALKQLKDSEERASYILMEKIEPEPFENCLLRPGSPARVVQCISELGIFGVYVRQEKTLVMNKHVGHLLRTKAIEHADGGVAAGVAVLDNPYPV.

The residue at position 2 (alanine 2) is an N-acetylalanine. Arginine 125 serves as a coordination point for substrate. Glutamate 144 contacts ATP. Mg(2+) contacts are provided by glutamate 144 and asparagine 146. Substrate-binding positions include 148 to 151, 214 to 216, glutamine 220, and 267 to 270; these read ISAS, ERN, and RDGY. Residues lysine 305, 364 to 373, tyrosine 375, and 398 to 401 each bind ATP; these read KPQREGGGNN and MEKI. A Mg(2+)-binding site is contributed by glutamate 368. The residue at position 415 (serine 415) is a Phosphoserine. Residue glutamate 425 participates in ATP binding. Substrate is bound at residue arginine 450. Residues lysine 452 and aspartate 458 each contribute to the ATP site. 461 to 462 provides a ligand contact to substrate; that stretch reads VA.

It belongs to the eukaryotic GSH synthase family. In terms of assembly, homodimer. Mg(2+) is required as a cofactor.

The catalysed reaction is gamma-L-glutamyl-L-cysteine + glycine + ATP = glutathione + ADP + phosphate + H(+). The enzyme catalyses gamma-L-glutamyl-(2S)-2-aminobutanoate + glycine + ATP = ophthalmate + ADP + phosphate + H(+). It participates in sulfur metabolism; glutathione biosynthesis; glutathione from L-cysteine and L-glutamate: step 2/2. In terms of biological role, catalyzes the production of glutathione from gamma-glutamylcysteine and glycine in an ATP-dependent manner. Glutathione (gamma-glutamylcysteinylglycine, GSH) is the most abundant intracellular thiol in living aerobic cells and is required for numerous processes including the protection of cells against oxidative damage, amino acid transport, the detoxification of foreign compounds, the maintenance of protein sulfhydryl groups in a reduced state and acts as a cofactor for a number of enzymes. Participates in ophthalmate biosynthesis in hepatocytes. This is Glutathione synthetase from Homo sapiens (Human).